The primary structure comprises 499 residues: MSKHDTDTSDQHAAKRRWLNAHEEGYHKAMGNRQVQMIAIGGAIGTGLFLGAGARLQMAGPALALVYLICGLFSFFILRALGELVLHRPSSGSFVSYAREFLGEKAAYVAGWMYFINWAMTGIVDITAVALYMHYWGAFGGVPQWVFALAALTIVGTMNMIGVKWFAEMEFWFALIKVLAIVTFLVVGTVFLGSGQPLDGNTTGFHLITDNGGFFPHGLLPALVLIQGVVFAFASIEMVGTAAGECKDPQTMVPKAINSVIWRIGLFYVGSVVLLVMLLPWSAYQAGQSPFVTFFSKLGVPYIGSIMNIVVLTAALSSLNSGLYCTGRILRSMAMGGSAPSFMAKMSRQHVPYAGILATLVVYVVGVFLNYLVPSRVFEIVLNFASLGIIASWAFIIVCQMRLRKAIKEGKAADVSFKLPGAPFTSWLTLLFLLSVLVLMAFDYPNGTYTIAALPIIGILLVIGWFGVRKRVAEIHSTAPVVEEDEEKQEIVFKPETAS.

The next 12 helical transmembrane spans lie at 34 to 54 (QVQM…GAGA), 58 to 78 (MAGP…FFIL), 109 to 129 (VAGW…ITAV), 146 to 166 (VFAL…VKWF), 171 to 191 (FWFA…GTVF), 219 to 239 (LLPA…IEMV), 264 to 284 (IGLF…WSAY), 298 to 318 (LGVP…ALSS), 353 to 373 (YAGI…NYLV), 378 to 398 (FEIV…FIIV), 422 to 442 (APFT…LMAF), and 448 to 468 (TYTI…WFGV).

It belongs to the amino acid-polyamine-organocation (APC) superfamily. Amino acid transporter (AAT) (TC 2.A.3.1) family.

It localises to the cell inner membrane. The chain is L-asparagine permease (ansP) from Escherichia coli (strain K12).